Reading from the N-terminus, the 626-residue chain is DNA mismatch repair protein MutL (626 aa).

Residues 352-399 are disordered; sequence QPPSPSFTSRPSSAGYASGSWHPAVSSPRTEWSPQTAHPAHRPLDLGA. Positions 378-387 are enriched in polar residues; sequence SPRTEWSPQT.

Belongs to the DNA mismatch repair MutL/HexB family.

Its function is as follows. This protein is involved in the repair of mismatches in DNA. It is required for dam-dependent methyl-directed DNA mismatch repair. May act as a 'molecular matchmaker', a protein that promotes the formation of a stable complex between two or more DNA-binding proteins in an ATP-dependent manner without itself being part of a final effector complex. This chain is DNA mismatch repair protein MutL, found in Brucella anthropi (strain ATCC 49188 / DSM 6882 / CCUG 24695 / JCM 21032 / LMG 3331 / NBRC 15819 / NCTC 12168 / Alc 37) (Ochrobactrum anthropi).